We begin with the raw amino-acid sequence, 93 residues long: Transcription factor RADIALIS (93 aa).

Residues 6 to 61 enclose the SANT domain; it reads GSGRPWSAKENKAFERALAVYDKDTPDRWANVARAVEGRTPEEVKKHYEILVEDIK.

In terms of tissue distribution, specifically expressed in the dorsal region of developing flowers.

The protein resides in the nucleus. Its function is as follows. Involved in the dorsovental asymmetry of flowers. Promotes dorsal identity. This chain is Transcription factor RADIALIS (RAD), found in Antirrhinum majus (Garden snapdragon).